Reading from the N-terminus, the 249-residue chain is Sugar fermentation stimulation protein homolog (249 aa).

Belongs to the SfsA family.

This chain is Sugar fermentation stimulation protein homolog, found in Rhizobium rhizogenes (strain K84 / ATCC BAA-868) (Agrobacterium radiobacter).